We begin with the raw amino-acid sequence, 316 residues long: MSEQFQHVSVLLHESIDGLAIKPDGIYIDGTFGRGGHSRQILSQLGENGRLYSIDRDPQAIAEAKTITDPKFTIIHGPFSGLKQYVEELDLVGKIDGVLLDLGVSSPQLDDAERGFSFMKDGPLDMRMDPTSGIPVSQWLQEADVEDITWVIREFGEDKHAWRIAKGIVAYLENEENEPLTRTSQLAKLISEVAPKSFKEKKHPATRAFQAFRIYINSELDEIDTALKGALDVLAPEGRLSVISFHSLEDRMVKHFIRKESKGPQVPHGLPLTEEQIKALGSAKMKPVGKAIKPTKNEVNENVRSRSSVLRIAERL.

Residues Gly-35–His-37, Asp-55, Phe-79, Asp-101, and Gln-108 contribute to the S-adenosyl-L-methionine site.

This sequence belongs to the methyltransferase superfamily. RsmH family.

The protein resides in the cytoplasm. It catalyses the reaction cytidine(1402) in 16S rRNA + S-adenosyl-L-methionine = N(4)-methylcytidine(1402) in 16S rRNA + S-adenosyl-L-homocysteine + H(+). Functionally, specifically methylates the N4 position of cytidine in position 1402 (C1402) of 16S rRNA. The protein is Ribosomal RNA small subunit methyltransferase H of Aliivibrio fischeri (strain ATCC 700601 / ES114) (Vibrio fischeri).